Reading from the N-terminus, the 397-residue chain is Odorant receptor 22b (397 aa).

Residues 1-49 are Cytoplasmic-facing; that stretch reads MLSQFFPHIKEKPLSERVKSRDAFVYLDRVMWSFGWTVPENKRWDLHYK. Residues 50 to 70 traverse the membrane as a helical segment; sequence LWSTFVTLLIFILLPISVSVE. Over 71–85 the chain is Extracellular; the sequence is YIQRFKTFSAGEFLS. The helical transmembrane segment at 86–105 threads the bilayer; that stretch reads SIQIGVNMYGSSFKSYLTMM. At 106 to 143 the chain is on the cytoplasmic side; it reads GYKKRQEAKMSLDELDKRCVCDEERTIVHRHVALGNFC. Residues 144-164 traverse the membrane as a helical segment; the sequence is YIFYHIAYTSFLISNFLSFIM. Topologically, residues 165-194 are extracellular; it reads KRIHAWRMYFPYVDPEKQFYISSIAEVILR. Residues 195–215 traverse the membrane as a helical segment; that stretch reads GWAVFMDLCTDVCPLISMVIA. Residues 216–268 lie on the Cytoplasmic side of the membrane; sequence RCHITLLKQRLRNLRSEPGRTEDEYLKELADCVRDHRLILDYVDALRSVFSGT. The chain crosses the membrane as a helical span at residues 269–289; it reads IFVQFLLIGIVLGLSMINIMF. Residues 290–295 lie on the Extracellular side of the membrane; that stretch reads FSTLST. Residues 296–316 traverse the membrane as a helical segment; sequence GVAVVLFMSCVSMQTFPFCYL. Topologically, residues 317-347 are cytoplasmic; that stretch reads CNMIMDDCQEMADSLFQSDWTSADRRYKSTL. A helical transmembrane segment spans residues 348 to 368; the sequence is VYFLHNLQQPIILTAGGVFPI. At 369 to 397 the chain is on the extracellular side; sequence SMQTNLNMVKLAFTVVTIVKQFNLAEKFQ.

Belongs to the insect chemoreceptor superfamily. Heteromeric odorant receptor channel (TC 1.A.69) family. Or2a subfamily. Interacts with Orco, via conserved C-terminal cytoplasmic loops. Complexes exist early in the endomembrane system in olfactory sensory neurons (OSNs), coupling these complexes to the conserved ciliary trafficking pathway. Expressed with Orco in 20-22 sensory neurons on the medial-proximal edge of the antenna. This expression pattern matches the distribution of the large sensilla basiconica. Expression is first seen at 60 hours APF in a subset of cells restricted to a subregion of the developing antenna. Expression continues throughout antennal development. Expressed in the ab3A neuron which responds to ethyl butyrate.

The protein localises to the cell membrane. Functionally, odorant receptor which mediates acceptance or avoidance behavior, depending on its substrates. The odorant receptor repertoire encodes a large collection of odor stimuli that vary widely in identity, intensity, and duration. Involved in the behavioral responses to esters. Complexes with Orco to form odorant-sensing units, providing sensitive and prolonged odorant signaling and calcium permeability. They are necessary and sufficient to promote functional reconstitution of odor-evoked signaling in sensory neurons that normally respond only to carbon dioxide. This chain is Odorant receptor 22b (Or22b), found in Drosophila melanogaster (Fruit fly).